Here is a 251-residue protein sequence, read N- to C-terminus: Small ribosomal subunit protein uS2 (251 aa).

It belongs to the universal ribosomal protein uS2 family.

This chain is Small ribosomal subunit protein uS2, found in Cereibacter sphaeroides (strain ATCC 17029 / ATH 2.4.9) (Rhodobacter sphaeroides).